Consider the following 2548-residue polypeptide: Unconventional myosin-IXa (2548 aa).

One can recognise a Ras-associating domain in the interval 14–112 (NEHTLRIYPG…YRFLLREKNL (99 aa)). The Myosin motor domain occupies 146 to 1016 (KDFDDLCSLP…ERQHLQDLLH (871 aa)). A helical membrane pass occupies residues 175–195 (IYTYVGSILIVINPFKFLPIY). 239-246 (GESGSGKT) provides a ligand contact to ATP. Residue Ser-755 is modified to Phosphoserine. An actin-binding region spans residues 898–920 (LSKLMETLGQAEPYFVKCIRSNA). 5 IQ domains span residues 1021-1041 (RRIILLQRWFRVLLCRQHFLH), 1042-1071 (LRQASVIIQRFWRNYLNQKQVRDAAVQKDA), 1074-1103 (MASAAALLQASWRAHLERQRYLELRAAAIV), 1115-1144 (RHMAAICIQARWKAYRESKRYQEQRKKIIL), and 1138-1167 (QRKKIILLQSTCRGFRARQRFKALKEQRLR). A neck or regulatory domain region spans residues 1021 to 1162 (RRIILLQRWF…RARQRFKALK (142 aa)). The tract at residues 1163 to 2511 (EQRLRETKPE…LKNVKNSPQK (1349 aa)) is tail. Residues 1223–1236 (SVDCLKESPNKQQE) are compositionally biased toward basic and acidic residues. The disordered stretch occupies residues 1223–1250 (SVDCLKESPNKQQERAQSQSGVDLQEDV). A phosphoserine mark is found at Ser-1242 and Ser-1258. A coiled-coil region spans residues 1264-1291 (QKKVGRAKRESRRMRELEQAIFSLELLK). Residues Ser-1299 and Ser-1317 each carry the phosphoserine modification. The tract at residues 1299–1386 (SPSEDRRWST…SNETSSAEHL (88 aa)) is disordered. Low complexity-rich tracts occupy residues 1324-1337 (SESSQGSLELLSYE) and 1356-1366 (FPSPKISSSPK). Phosphoserine is present on Ser-1364. A compositionally biased stretch (polar residues) spans 1372 to 1381 (NALSASNETS). Positions 1486 to 1532 (VLKKLEKLNTEKEERQKQLQQQNEKEMMEQIRQQTDILEKERKAFKT) form a coiled coil. Positions 1804-1836 (YHPTPPLSPELPGSCRKEFKENKEPSPKAKRKR) are disordered. Residues 1818-1830 (CRKEFKENKEPSP) show a composition bias toward basic and acidic residues. Ser-1948 carries the phosphoserine modification. 2 consecutive Phorbol-ester/DAG-type zinc fingers follow at residues 1999-2048 (GHIF…TAKC) and 2068-2119 (LTSE…DAES). The Rho-GAP domain occupies 2063–2251 (VELSRLTSED…LIVVEQMNKY (189 aa)). Position 2294 is a phosphoserine (Ser-2294). Residues 2315-2358 (AAMETDITEQQQAAMQQEERVLTEQIENLQKEKEELTFEMLVLE) adopt a coiled-coil conformation. Disordered regions lie at residues 2359–2383 (PRASDDETLESEASIGTADSSENLN) and 2401–2424 (SSLKTAGKSEPSSKLRKQLKKQQD). At Ser-2464 the chain carries Phosphoserine. The disordered stretch occupies residues 2490–2531 (RGTFNPEKGKQKLKNVKNSPQKTKETPEGTVMSGRRKTVDPD).

It belongs to the TRAFAC class myosin-kinesin ATPase superfamily. Myosin family. Phosphorylated by ALPK1 following monosodium urate monohydrate (MSU)-induced inflammation. As to expression, found to be expressed in testis and placenta and at lower levels in all the examined tissues with the exception of liver. Isoform 5: Found in leukocytes but not in brain, retina or testis.

The protein localises to the membrane. Its subcellular location is the cytoplasm. The protein resides in the synapse. It localises to the cell projection. It is found in the growth cone. In terms of biological role, myosins are actin-based motor molecules with ATPase activity. Unconventional myosins serve in intracellular movements. Regulates Rho by stimulating it's GTPase activity in neurons. Required for the regulation of neurite branching and motor neuron axon guidance. In Homo sapiens (Human), this protein is Unconventional myosin-IXa (MYO9A).